Here is an 893-residue protein sequence, read N- to C-terminus: Translation initiation factor IF-2 (893 aa).

2 disordered regions span residues 51–203 (KEHG…AEAE) and 216–300 (EENE…SMQH). Composition is skewed to basic and acidic residues over residues 102-203 (ALEE…AEAE), 216-238 (EENE…DADY), and 245-261 (HARE…EQQP). The 170-residue stretch at 392–561 (GRAPVVTIMG…LLQSEVLELT (170 aa)) folds into the tr-type G domain. The tract at residues 401 to 408 (GHVDHGKT) is G1. 401-408 (GHVDHGKT) is a binding site for GTP. The G2 stretch occupies residues 426–430 (GITQH). The tract at residues 447 to 450 (DTPG) is G3. Residues 447-451 (DTPGH) and 501-504 (NKID) each bind GTP. The segment at 501–504 (NKID) is G4. Residues 537–539 (SAK) form a G5 region.

The protein belongs to the TRAFAC class translation factor GTPase superfamily. Classic translation factor GTPase family. IF-2 subfamily.

The protein localises to the cytoplasm. In terms of biological role, one of the essential components for the initiation of protein synthesis. Protects formylmethionyl-tRNA from spontaneous hydrolysis and promotes its binding to the 30S ribosomal subunits. Also involved in the hydrolysis of GTP during the formation of the 70S ribosomal complex. The polypeptide is Translation initiation factor IF-2 (Aliivibrio fischeri (strain MJ11) (Vibrio fischeri)).